A 188-amino-acid chain; its full sequence is Protein GrpE (188 aa).

It belongs to the GrpE family. As to quaternary structure, homodimer.

It is found in the cytoplasm. Functionally, participates actively in the response to hyperosmotic and heat shock by preventing the aggregation of stress-denatured proteins, in association with DnaK and GrpE. It is the nucleotide exchange factor for DnaK and may function as a thermosensor. Unfolded proteins bind initially to DnaJ; upon interaction with the DnaJ-bound protein, DnaK hydrolyzes its bound ATP, resulting in the formation of a stable complex. GrpE releases ADP from DnaK; ATP binding to DnaK triggers the release of the substrate protein, thus completing the reaction cycle. Several rounds of ATP-dependent interactions between DnaJ, DnaK and GrpE are required for fully efficient folding. In Chromobacterium violaceum (strain ATCC 12472 / DSM 30191 / JCM 1249 / CCUG 213 / NBRC 12614 / NCIMB 9131 / NCTC 9757 / MK), this protein is Protein GrpE.